The chain runs to 205 residues: Putative 3-methyladenine DNA glycosylase (205 aa).

Belongs to the DNA glycosylase MPG family.

The protein is Putative 3-methyladenine DNA glycosylase of Bacillus thuringiensis (strain Al Hakam).